The sequence spans 416 residues: 4-hydroxy-3-methylbut-2-en-1-yl diphosphate synthase (flavodoxin) (416 aa).

Residues cysteine 304, cysteine 307, cysteine 350, and glutamate 357 each contribute to the [4Fe-4S] cluster site.

Belongs to the IspG family. It depends on [4Fe-4S] cluster as a cofactor.

The enzyme catalyses (2E)-4-hydroxy-3-methylbut-2-enyl diphosphate + oxidized [flavodoxin] + H2O + 2 H(+) = 2-C-methyl-D-erythritol 2,4-cyclic diphosphate + reduced [flavodoxin]. It functions in the pathway isoprenoid biosynthesis; isopentenyl diphosphate biosynthesis via DXP pathway; isopentenyl diphosphate from 1-deoxy-D-xylulose 5-phosphate: step 5/6. Converts 2C-methyl-D-erythritol 2,4-cyclodiphosphate (ME-2,4cPP) into 1-hydroxy-2-methyl-2-(E)-butenyl 4-diphosphate. This chain is 4-hydroxy-3-methylbut-2-en-1-yl diphosphate synthase (flavodoxin), found in Agrobacterium fabrum (strain C58 / ATCC 33970) (Agrobacterium tumefaciens (strain C58)).